Here is a 1404-residue protein sequence, read N- to C-terminus: DNA (cytosine-5)-methyltransferase 3 (1404 aa).

Positions 1–10 (MKTKAGKQKK) are enriched in basic residues. A disordered region spans residues 1-35 (MKTKAGKQKKRSVDSDDDVSRERRPKRATSGTNFK). Residues 11-22 (RSVDSDDDVSRE) are compositionally biased toward basic and acidic residues. K486 is covalently cross-linked (Glycyl lysine isopeptide (Lys-Gly) (interchain with G-Cter in ubiquitin)). BAH domains are found at residues 614–748 (RKMD…FSLP) and 788–929 (IKYS…KKLP). One can recognise an SAM-dependent MTase C5-type domain in the interval 969–1402 (LATLDIFAGC…RKLKEALHLR (434 aa)). The active site involves C1085.

The protein belongs to the class I-like SAM-binding methyltransferase superfamily. C5-methyltransferase family.

It is found in the nucleus. The enzyme catalyses a 2'-deoxycytidine in DNA + S-adenosyl-L-methionine = a 5-methyl-2'-deoxycytidine in DNA + S-adenosyl-L-homocysteine + H(+). Maintains chromatin CpG methylation that plays a role in genomic imprinting, regulation of embryogenesis and seed viability. Required for proper patterns of CG DNA methylation in dividing cells. Required during the endosperm development in seeds. This Arabidopsis thaliana (Mouse-ear cress) protein is DNA (cytosine-5)-methyltransferase 3 (MET3).